Consider the following 156-residue polypeptide: ATP synthase subunit b (156 aa).

Residues Leu7–Leu29 form a helical membrane-spanning segment.

It belongs to the ATPase B chain family. In terms of assembly, F-type ATPases have 2 components, F(1) - the catalytic core - and F(0) - the membrane proton channel. F(1) has five subunits: alpha(3), beta(3), gamma(1), delta(1), epsilon(1). F(0) has three main subunits: a(1), b(2) and c(10-14). The alpha and beta chains form an alternating ring which encloses part of the gamma chain. F(1) is attached to F(0) by a central stalk formed by the gamma and epsilon chains, while a peripheral stalk is formed by the delta and b chains.

It is found in the cell inner membrane. Functionally, f(1)F(0) ATP synthase produces ATP from ADP in the presence of a proton or sodium gradient. F-type ATPases consist of two structural domains, F(1) containing the extramembraneous catalytic core and F(0) containing the membrane proton channel, linked together by a central stalk and a peripheral stalk. During catalysis, ATP synthesis in the catalytic domain of F(1) is coupled via a rotary mechanism of the central stalk subunits to proton translocation. Component of the F(0) channel, it forms part of the peripheral stalk, linking F(1) to F(0). The polypeptide is ATP synthase subunit b (Burkholderia multivorans (strain ATCC 17616 / 249)).